Here is a 90-residue protein sequence, read N- to C-terminus: Putative beta-neurotoxin RjAa14F (90 aa).

The N-terminal stretch at 1-18 (MKILIFIIASFMLIGVEC) is a signal peptide. The region spanning 19–89 (KEGYPTNSEG…VWDPNNNKCV (71 aa)) is the LCN-type CS-alpha/beta domain. Cystine bridges form between Cys29-Cys88, Cys33-Cys62, Cys40-Cys69, and Cys44-Cys71.

This sequence belongs to the long (4 C-C) scorpion toxin superfamily. Sodium channel inhibitor family. Beta subfamily. Expressed by the venom gland.

The protein localises to the secreted. Beta toxins bind voltage-independently at site-4 of sodium channels (Nav) and shift the voltage of activation toward more negative potentials thereby affecting sodium channel activation and promoting spontaneous and repetitive firing. The polypeptide is Putative beta-neurotoxin RjAa14F (Rhopalurus junceus (Caribbean blue scorpion)).